The following is a 75-amino-acid chain: Defensin-like protein 59 (75 aa).

The signal sequence occupies residues M1–S19. Cystine bridges form between C39/C73, C43/C66, C52/C71, and C56/C72.

This sequence belongs to the DEFL family.

It is found in the secreted. The chain is Defensin-like protein 59 from Arabidopsis thaliana (Mouse-ear cress).